A 579-amino-acid polypeptide reads, in one-letter code: Putative ABC transporter ATP-binding protein VPA1482 (579 aa).

ABC transporter domains follow at residues 3 to 244 (IEFS…GIRE) and 299 to 533 (LEVR…ANLT). Residues 37–44 (GPSGSGKS) and 332–339 (GKNGSGKS) each bind ATP.

This sequence belongs to the ABC transporter superfamily.

The protein localises to the cell inner membrane. In terms of biological role, probably part of an ABC transporter complex. Responsible for energy coupling to the transport system. The polypeptide is Putative ABC transporter ATP-binding protein VPA1482 (Vibrio parahaemolyticus serotype O3:K6 (strain RIMD 2210633)).